Consider the following 504-residue polypeptide: Cytochrome P450 3A11 (504 aa).

C443 is a heme binding site.

Belongs to the cytochrome P450 family. The cofactor is heme. Highly expressed in liver.

It is found in the endoplasmic reticulum membrane. The protein resides in the microsome membrane. The catalysed reaction is an organic molecule + reduced [NADPH--hemoprotein reductase] + O2 = an alcohol + oxidized [NADPH--hemoprotein reductase] + H2O + H(+). Catalyzes erythromycin N-demethylation, nifedipine oxidation and testosterone 6 beta-hydroxylation. The sequence is that of Cytochrome P450 3A11 (Cyp3a11) from Mus musculus (Mouse).